Here is a 557-residue protein sequence, read N- to C-terminus: MSVQSSGVLLAPSKNLSPEVGRRCANFHPSIWGDHFLSYASEFTNTDDHLKQHVQQLKEEVRKMLMAADDDSAQKLLLIDAIQRLGVAYHFESEIDEVLKHMFDGSVVSAEEDVYTASLRFRLLRQQGYHVSCDLFNNFKDNEGNFKESLSSDVRGMLSLYEATHFRVHGEDILDEALAFTTTHLQSATKHSSNPLAEQVVHALKQPIRKGLPRLEARHYFSVYQADDSHNKALLKLAKLDFNLLQKLHQKELSDISAWWKDLDFAHKLPFARDRVVECYFWILGVYFEPQFFFARRILTKVIAMTSIIDDIYDVYGTLEELELFTEAVERWDISAIDQLPEYMRVCYQALLYVYSEIEEEMAKEGRSYRLYYAKEAMKNQVRAYYEEAKWLQVQQIPTMEEYMPVALVTSAYSMLATTSFVGMGDAVTKESFDWIFSKPKIVRASAIVCRLMDDMVFHKFEQKRGHVASAVECYMKQHGASEQETPNEFPQPVREAWKDINEECLIPTAVPMPILMRVLNLARVIDVIYKNEDGYTHFGAVLKDFVTSMLIDPVPI.

The Mg(2+) site is built by D310, D314, and E462. The DDXXD motif signature appears at 310–314 (DDIYD).

Belongs to the terpene synthase family. Tpsa subfamily. The cofactor is Mg(2+). Expressed in flowers. Detected in stems, young leaves and tendrils.

It localises to the cytoplasm. It carries out the reaction (2E,6E)-farnesyl diphosphate + H2O = (1E,4S,5E,7R)-germacra-1(10),5-dien-11-ol + diphosphate. It catalyses the reaction (2E,6E)-farnesyl diphosphate = (-)-germacrene D + diphosphate. Its pathway is secondary metabolite biosynthesis; terpenoid biosynthesis. Functionally, involved in the biosynthesis of germacrene D. Can use farnesyl diphosphate as substrate, but not geranyl diphosphate or geranylgeranyl diphosphate. Produces mainly (-)-germacrene D along with gamma-cadinene. The protein is (-)-germacrene D synthase of Vitis vinifera (Grape).